The following is a 283-amino-acid chain: ATP synthase gamma chain (283 aa).

Belongs to the ATPase gamma chain family. In terms of assembly, F-type ATPases have 2 components, CF(1) - the catalytic core - and CF(0) - the membrane proton channel. CF(1) has five subunits: alpha(3), beta(3), gamma(1), delta(1), epsilon(1). CF(0) has three main subunits: a, b and c.

It localises to the cell inner membrane. In terms of biological role, produces ATP from ADP in the presence of a proton gradient across the membrane. The gamma chain is believed to be important in regulating ATPase activity and the flow of protons through the CF(0) complex. In Ehrlichia ruminantium (strain Welgevonden), this protein is ATP synthase gamma chain.